A 206-amino-acid polypeptide reads, in one-letter code: Pyrrolidone-carboxylate peptidase (206 aa).

Residues Glu-76, Cys-139, and His-163 contribute to the active site.

It belongs to the peptidase C15 family. As to quaternary structure, homotetramer.

Its subcellular location is the cytoplasm. It carries out the reaction Release of an N-terminal pyroglutamyl group from a polypeptide, the second amino acid generally not being Pro.. Removes 5-oxoproline from various penultimate amino acid residues except L-proline. The sequence is that of Pyrrolidone-carboxylate peptidase (pcp) from Pyrococcus horikoshii (strain ATCC 700860 / DSM 12428 / JCM 9974 / NBRC 100139 / OT-3).